The sequence spans 319 residues: Small ribosomal subunit protein RACK1 (319 aa).

N-acetylalanine is present on Ala2. WD repeat units follow at residues 15–55 (GHNG…QKFG), 63–102 (GHSHIVQDCTLTADGAYALSASWDKTLRLWDVATGETYQR), 105–145 (GHKS…ATLL), 147–191 (HNDW…IEAD), 194–233 (GHNSNINTLTASPDGTLIASAGKDGEIMLWNLAAKKAMYT), 235–275 (SAQD…DDLR), and 284–319 (AAEPHAVSLAWSADGQTLFAGYTDNVIRVWQVMTAN). Glycyl lysine isopeptide (Lys-Gly) (interchain with G-Cter in ubiquitin) cross-links involve residues Lys46 and Lys53. Thr96 is subject to Phosphothreonine. Glycyl lysine isopeptide (Lys-Gly) (interchain with G-Cter in ubiquitin) cross-links involve residues Lys107, Lys137, and Lys161. At Thr168 the chain carries Phosphothreonine.

The protein belongs to the WD repeat G protein beta family. Ribosomal protein RACK1 subfamily. Component of the small ribosomal subunit (SSU). Mature yeast ribosomes consist of a small (40S) and a large (60S) subunit. The 40S small subunit contains 1 molecule of ribosomal RNA (18S rRNA) and 33 different proteins (encoded by 57 genes). The large 60S subunit contains 3 rRNA molecules (25S, 5.8S and 5S rRNA) and 46 different proteins (encoded by 81 genes). RACK1 is located at the head of the SSU in the vicinity of the mRNA exit channel. RACK1 interacts with the mRNA-binding protein SCP16. RACK1 also exists simultaneously as a homodimer in a cytosolic non-ribosome-bound form.

The protein resides in the cytoplasm. Functionally, component of the ribosome, a large ribonucleoprotein complex responsible for the synthesis of proteins in the cell. The small ribosomal subunit (SSU) binds messenger RNAs (mRNAs) and translates the encoded message by selecting cognate aminoacyl-transfer RNA (tRNA) molecules. The large subunit (LSU) contains the ribosomal catalytic site termed the peptidyl transferase center (PTC), which catalyzes the formation of peptide bonds, thereby polymerizing the amino acids delivered by tRNAs into a polypeptide chain. The nascent polypeptides leave the ribosome through a tunnel in the LSU and interact with protein factors that function in enzymatic processing, targeting, and the membrane insertion of nascent chains at the exit of the ribosomal tunnel. Located at the head of the 40S ribosomal subunit in the vicinity of the mRNA exit channel, RACK1 serves as a scaffold protein that can recruit other proteins to the ribosome. Involved in induction of the ribosome quality control (RQC) pathway; a pathway that degrades nascent peptide chains during problematic translation. Involved in the negative regulation of translation of a specific subset of proteins. The sequence is that of Small ribosomal subunit protein RACK1 from Saccharomyces cerevisiae (strain ATCC 204508 / S288c) (Baker's yeast).